The primary structure comprises 547 residues: Probable acetolactate synthase (547 aa).

Position 57 (Glu-57) interacts with thiamine diphosphate. FAD contacts are provided by residues Pro-159 and Asp-299–Asp-318. Positions Asp-388 to Ile-468 are thiamine pyrophosphate binding. 2 residues coordinate Mg(2+): Asp-439 and Asn-466.

Belongs to the TPP enzyme family. The cofactor is Mg(2+). Requires thiamine diphosphate as cofactor.

It catalyses the reaction 2 pyruvate + H(+) = (2S)-2-acetolactate + CO2. It functions in the pathway amino-acid biosynthesis; L-isoleucine biosynthesis; L-isoleucine from 2-oxobutanoate: step 1/4. It participates in amino-acid biosynthesis; L-valine biosynthesis; L-valine from pyruvate: step 1/4. The polypeptide is Probable acetolactate synthase (ilvG) (Mycobacterium bovis (strain ATCC BAA-935 / AF2122/97)).